We begin with the raw amino-acid sequence, 190 residues long: E3 ubiquitin-protein ligase RNF183 (190 aa).

The Cytoplasmic portion of the chain corresponds to 1 to 159 (MSEPQGQELR…RECVRNPHFR (159 aa)). Residues 13–60 (CPVCWNPFNNTFHTPKVLDCCHSFCVECLAHLSLVTPARRRLLCPLCR) form an RING-type zinc finger. The helical; Anchor for type IV membrane protein transmembrane segment at 160 to 180 (IFAYLMAVILSVTLLLIFSIF) threads the bilayer. The Lumenal portion of the chain corresponds to 181 to 190 (WTKQFFWGMG).

In terms of assembly, interacts with FATE1. Interacts with SEC16A. Interacts with BCL2L1. In terms of processing, autoubiquitinated (in vitro). As to expression, highly expressed in the kidney and testis.

The protein resides in the endoplasmic reticulum membrane. Its subcellular location is the endoplasmic reticulum. The protein localises to the golgi apparatus. It is found in the cis-Golgi network membrane. It localises to the lysosome membrane. The enzyme catalyses S-ubiquitinyl-[E2 ubiquitin-conjugating enzyme]-L-cysteine + [acceptor protein]-L-lysine = [E2 ubiquitin-conjugating enzyme]-L-cysteine + N(6)-ubiquitinyl-[acceptor protein]-L-lysine.. Its pathway is protein modification; protein ubiquitination. Its function is as follows. Acts as an E3 ubiquitin ligase catalyzing the covalent attachment of ubiquitin moieties onto substrate proteins. Triggers apoptosis in response to prolonged ER stress by mediating the polyubiquitination and subsequent proteasomal degradation of BCL2L1. May collaborate with FATE1 to restrain BIK protein levels thus regulating apoptotic signaling. The polypeptide is E3 ubiquitin-protein ligase RNF183 (Rnf183) (Mus musculus (Mouse)).